A 318-amino-acid chain; its full sequence is Ornithine carbamoyltransferase (318 aa).

Residues 63–66 (STRT), Gln90, Arg114, and 141–144 (HPCQ) each bind carbamoyl phosphate. L-ornithine contacts are provided by residues Asn172, Asp235, and 239–240 (SM). Carbamoyl phosphate contacts are provided by residues 275–276 (CL) and Arg303.

It belongs to the aspartate/ornithine carbamoyltransferase superfamily. OTCase family.

It localises to the cytoplasm. The enzyme catalyses carbamoyl phosphate + L-ornithine = L-citrulline + phosphate + H(+). The protein operates within amino-acid biosynthesis; L-arginine biosynthesis; L-arginine from L-ornithine and carbamoyl phosphate: step 1/3. Its function is as follows. Reversibly catalyzes the transfer of the carbamoyl group from carbamoyl phosphate (CP) to the N(epsilon) atom of ornithine (ORN) to produce L-citrulline. The sequence is that of Ornithine carbamoyltransferase from Parasynechococcus marenigrum (strain WH8102).